A 330-amino-acid chain; its full sequence is DNA-directed RNA polymerase subunit alpha (330 aa).

The segment at 1 to 236 (MQGSVTEFLK…EQLDAFVDLR (236 aa)) is alpha N-terminal domain (alpha-NTD). An alpha C-terminal domain (alpha-CTD) region spans residues 250–330 (FDPILLRPVD…NWPPASIAED (81 aa)).

It belongs to the RNA polymerase alpha chain family. As to quaternary structure, homodimer. The RNAP catalytic core consists of 2 alpha, 1 beta, 1 beta' and 1 omega subunit. When a sigma factor is associated with the core the holoenzyme is formed, which can initiate transcription.

It carries out the reaction RNA(n) + a ribonucleoside 5'-triphosphate = RNA(n+1) + diphosphate. In terms of biological role, DNA-dependent RNA polymerase catalyzes the transcription of DNA into RNA using the four ribonucleoside triphosphates as substrates. This chain is DNA-directed RNA polymerase subunit alpha, found in Vibrio parahaemolyticus serotype O3:K6 (strain RIMD 2210633).